The chain runs to 514 residues: 3-octaprenyl-4-hydroxybenzoate carboxy-lyase (514 aa).

Asparagine 177 is a Mn(2+) binding site. Prenylated FMN is bound by residues 180 to 182, 194 to 196, and 199 to 200; these read IYR, RWL, and RG. Glutamate 243 is a binding site for Mn(2+). The Proton donor role is filled by aspartate 314.

Belongs to the UbiD family. In terms of assembly, homohexamer. It depends on prenylated FMN as a cofactor. Mn(2+) serves as cofactor.

The protein localises to the cell membrane. The catalysed reaction is a 4-hydroxy-3-(all-trans-polyprenyl)benzoate + H(+) = a 2-(all-trans-polyprenyl)phenol + CO2. Its pathway is cofactor biosynthesis; ubiquinone biosynthesis. Catalyzes the decarboxylation of 3-octaprenyl-4-hydroxy benzoate to 2-octaprenylphenol, an intermediate step in ubiquinone biosynthesis. This chain is 3-octaprenyl-4-hydroxybenzoate carboxy-lyase, found in Bordetella petrii (strain ATCC BAA-461 / DSM 12804 / CCUG 43448).